The following is a 428-amino-acid chain: 3-phosphoshikimate 1-carboxyvinyltransferase (428 aa).

Residues lysine 23, serine 24, and arginine 28 each contribute to the 3-phosphoshikimate site. Lysine 23 lines the phosphoenolpyruvate pocket. Residues glycine 92 and arginine 120 each contribute to the phosphoenolpyruvate site. Residues serine 165, glutamine 167, aspartate 312, and lysine 339 each contribute to the 3-phosphoshikimate site. Glutamine 167 provides a ligand contact to phosphoenolpyruvate. Aspartate 312 (proton acceptor) is an active-site residue. 2 residues coordinate phosphoenolpyruvate: arginine 343 and arginine 384.

It belongs to the EPSP synthase family. As to quaternary structure, monomer.

It localises to the cytoplasm. It carries out the reaction 3-phosphoshikimate + phosphoenolpyruvate = 5-O-(1-carboxyvinyl)-3-phosphoshikimate + phosphate. The protein operates within metabolic intermediate biosynthesis; chorismate biosynthesis; chorismate from D-erythrose 4-phosphate and phosphoenolpyruvate: step 6/7. In terms of biological role, catalyzes the transfer of the enolpyruvyl moiety of phosphoenolpyruvate (PEP) to the 5-hydroxyl of shikimate-3-phosphate (S3P) to produce enolpyruvyl shikimate-3-phosphate and inorganic phosphate. The polypeptide is 3-phosphoshikimate 1-carboxyvinyltransferase (Sulfurimonas denitrificans (strain ATCC 33889 / DSM 1251) (Thiomicrospira denitrificans (strain ATCC 33889 / DSM 1251))).